The sequence spans 135 residues: Putative pre-16S rRNA nuclease (135 aa).

It belongs to the YqgF nuclease family.

The protein localises to the cytoplasm. In terms of biological role, could be a nuclease involved in processing of the 5'-end of pre-16S rRNA. This chain is Putative pre-16S rRNA nuclease, found in Buchnera aphidicola subsp. Acyrthosiphon pisum (strain 5A).